The chain runs to 577 residues: Protein downstream neighbor of son homolog (577 aa).

2 disordered regions span residues 1-67 and 328-382; these read MAEL…KRRN and FTQP…LEEM. The segment covering 362–375 has biased composition (acidic residues); it reads ETDEVSDESDEDES.

It belongs to the DONSON family. Component of the replisome complex.

It localises to the nucleus. Functionally, replisome component that maintains genome stability by protecting stalled or damaged replication forks. After the induction of replication stress, required for the stabilization of stalled replication forks, the efficient activation of the intra-S-phase and G/2M cell-cycle checkpoints and the maintenance of genome stability. The sequence is that of Protein downstream neighbor of son homolog from Xenopus tropicalis (Western clawed frog).